We begin with the raw amino-acid sequence, 280 residues long: Late embryogenesis abundant protein M17 (280 aa).

Residues 1–22 (MGNLKSLVLLALLFSFSVAVFA) form the signal peptide. Asn-23 is a glycosylation site (N-linked (GlcNAc...) asparagine). A run of 2 repeats spans residues 76–97 (GGCRWGCCGGWWRGRCRYCCRS) and 131–152 (GGCRWGCCGGWWRGRCRYCCRS). A 4 X 22 AA repeats, Cys-rich region spans residues 76-262 (GGCRWGCCGG…RGRCRYCCRS (187 aa)). Residues 163 to 184 (VEPNDVEPQQGGRGGGGGGGGG) form a disordered region. The segment covering 173–184 (GGRGGGGGGGGG) has biased composition (gly residues). Copy 3 of the repeat occupies 186–207 (GGCRWGCCGGWWRGRCRYCCRS). The interval 218 to 239 (VEPNDVEPQQGGRGGGGGGGGG) is disordered. A compositionally biased stretch (gly residues) spans 228 to 239 (GGRGGGGGGGGG). Residues 241–262 (GGCRWGCCGGWWRGRCRYCCRS) form repeat 4.

Functionally, may be involved in the acquisition of desiccation tolerance during late phase of embryogenesis. The polypeptide is Late embryogenesis abundant protein M17 (Arabidopsis thaliana (Mouse-ear cress)).